Consider the following 389-residue polypeptide: MQPRRGEPYLLTPGPLTTAFSTKEAMLRDWGSWDGDFRAMTALLRSSLLEIAGDTAGEYDCVPLQGSGSYCVEAMLGSLIPRDAHALVLANGAYGKRIVTTLGYLGRACTVLDKGDYLPPRGAEIERMLDDDPRITHVVAVHCETSSGILNPIEEIAAATAKKGRKLLIDSMSAFGAVPLDVREIACEAFVSSANKCIEGVPGFGFVIARKSALREAKGRSHSLALDVYDQWDVMNRTGQWRFTPPTHAVAAFIEALRLFRLEGGQVGRLARYANNRDVLVAGMRELGFEPLLNARWRSPVIVTFFAPAHPSFRFETFYELMKQQGFIIYPGKLTVVDSFRIGCIGQVDEHVMRRVVEACANSLRTMGVGHAAPPAAALEERRTLAEAA.

Position 196 is an N6-(pyridoxal phosphate)lysine (lysine 196).

The protein belongs to the class-V pyridoxal-phosphate-dependent aminotransferase family. PhnW subfamily. As to quaternary structure, homodimer. Requires pyridoxal 5'-phosphate as cofactor.

The enzyme catalyses (2-aminoethyl)phosphonate + pyruvate = phosphonoacetaldehyde + L-alanine. Its function is as follows. Involved in phosphonate degradation. The sequence is that of 2-aminoethylphosphonate--pyruvate transaminase 1 from Paraburkholderia xenovorans (strain LB400).